We begin with the raw amino-acid sequence, 136 residues long: Small cardioactive peptides (136 aa).

The first 24 residues, 1–24 (METSVSRVTVSLTLLVLIICSADA), serve as a signal peptide directing secretion. Methionine amide is present on residues M33 and M46. Residues 49–135 (SQMKTETGTD…VLSKLKSLLQ (87 aa)) constitute a propeptide, carboxy-terminal peptide.

Belongs to the SCP family. In terms of processing, contains three disulfide bonds. In terms of tissue distribution, highly expressed in the buccal ganglion.

The protein localises to the secreted. Involved in the stimulation of contractile activity in the gut, the increase of the amplitude of the heart beat, and enhancement of the contractile response of the radula closer muscle. The sequence is that of Small cardioactive peptides from Aplysia californica (California sea hare).